A 209-amino-acid chain; its full sequence is Dual specificity phosphatase 29 (209 aa).

In terms of domain architecture, Tyrosine-protein phosphatase spans 45-193 (HVNEVWPNLY…LRELDIKLAL (149 aa)). Substrate is bound at residue 137 to 144 (NCAMGRSR). C138 (phosphocysteine intermediate) is an active-site residue.

Belongs to the protein-tyrosine phosphatase family. Non-receptor class dual specificity subfamily.

The protein localises to the cytoplasm. The protein resides in the nucleus. The enzyme catalyses O-phospho-L-tyrosyl-[protein] + H2O = L-tyrosyl-[protein] + phosphate. It catalyses the reaction O-phospho-L-seryl-[protein] + H2O = L-seryl-[protein] + phosphate. It carries out the reaction O-phospho-L-threonyl-[protein] + H2O = L-threonyl-[protein] + phosphate. In terms of biological role, dual specificity phosphatase able to dephosphorylate phosphotyrosine, phosphoserine and phosphothreonine residues, with a preference for phosphotyrosine as a substrate. Dual specificity phosphatase able to dephosphorylate phosphotyrosine, phosphoserine and phosphothreonine residues within the same substrate, with a preference for phosphotyrosine as a substrate. Involved in the modulation of AMPK and MAPK1/2 signaling pathway. The sequence is that of Dual specificity phosphatase 29 (dusp29) from Xenopus laevis (African clawed frog).